The chain runs to 294 residues: Glycine--tRNA ligase alpha subunit (294 aa).

This sequence belongs to the class-II aminoacyl-tRNA synthetase family. As to quaternary structure, tetramer of two alpha and two beta subunits.

It is found in the cytoplasm. The catalysed reaction is tRNA(Gly) + glycine + ATP = glycyl-tRNA(Gly) + AMP + diphosphate. The polypeptide is Glycine--tRNA ligase alpha subunit (Lawsonia intracellularis (strain PHE/MN1-00)).